The following is a 251-amino-acid chain: tRNA1(Val) (adenine(37)-N6)-methyltransferase (251 aa).

Belongs to the methyltransferase superfamily. tRNA (adenine-N(6)-)-methyltransferase family.

The protein resides in the cytoplasm. The catalysed reaction is adenosine(37) in tRNA1(Val) + S-adenosyl-L-methionine = N(6)-methyladenosine(37) in tRNA1(Val) + S-adenosyl-L-homocysteine + H(+). Specifically methylates the adenine in position 37 of tRNA(1)(Val) (anticodon cmo5UAC). This chain is tRNA1(Val) (adenine(37)-N6)-methyltransferase, found in Shewanella frigidimarina (strain NCIMB 400).